Reading from the N-terminus, the 122-residue chain is Large ribosomal subunit protein uL29A (122 aa).

The stretch at 10–69 (QLGIKQIEERAAEIKADLAALRQKKNSGDVGANDIKTAKKNLARALTVRREKILEELVEA) forms a coiled coil.

Belongs to the universal ribosomal protein uL29 family. Component of the large ribosomal subunit.

It localises to the cytoplasm. The polypeptide is Large ribosomal subunit protein uL29A (RPL35A) (Encephalitozoon cuniculi (strain GB-M1) (Microsporidian parasite)).